The primary structure comprises 377 residues: Nitric oxide reductase FlRd-NAD(+) reductase (377 aa).

It belongs to the FAD-dependent oxidoreductase family. Requires FAD as cofactor.

Its subcellular location is the cytoplasm. It carries out the reaction 2 reduced [nitric oxide reductase rubredoxin domain] + NAD(+) + H(+) = 2 oxidized [nitric oxide reductase rubredoxin domain] + NADH. The protein operates within nitrogen metabolism; nitric oxide reduction. One of at least two accessory proteins for anaerobic nitric oxide (NO) reductase. Reduces the rubredoxin moiety of NO reductase. In Salmonella paratyphi A (strain AKU_12601), this protein is Nitric oxide reductase FlRd-NAD(+) reductase.